Reading from the N-terminus, the 301-residue chain is Probable alpha-L-glutamate ligase (301 aa).

Residues 104–287 (MQLLSRKGIG…VAGLIVDFIE (184 aa)) form the ATP-grasp domain. ATP is bound by residues K141, 178 to 179 (EF), D187, and 211 to 213 (RSN). 3 residues coordinate Mg(2+): D248, E260, and N262. Mn(2+) is bound by residues D248, E260, and N262.

Belongs to the RimK family. It depends on Mg(2+) as a cofactor. Mn(2+) serves as cofactor.

The sequence is that of Probable alpha-L-glutamate ligase from Aliivibrio salmonicida (strain LFI1238) (Vibrio salmonicida (strain LFI1238)).